Reading from the N-terminus, the 339-residue chain is Glyoxylate reductase (339 aa).

Residues 157 to 160 (LGRI) and 239 to 241 (TAR) contribute to the NADP(+) site. Residues R241 and E270 contribute to the active site. Catalysis depends on H289, which acts as the Proton donor. Position 289–291 (289–291 (HIA)) interacts with NADP(+).

This sequence belongs to the D-isomer specific 2-hydroxyacid dehydrogenase family. GyaR subfamily. Homodimer.

It is found in the cytoplasm. It carries out the reaction glycolate + NAD(+) = glyoxylate + NADH + H(+). This chain is Glyoxylate reductase, found in Thermofilum pendens (strain DSM 2475 / Hrk 5).